A 301-amino-acid chain; its full sequence is Ethylmalonyl-CoA decarboxylase (301 aa).

Position 211 is an N6-acetyllysine; alternate (Lys-211). The residue at position 211 (Lys-211) is an N6-succinyllysine; alternate. Lys-295 bears the N6-succinyllysine mark.

The protein belongs to the enoyl-CoA hydratase/isomerase family.

Its subcellular location is the cytoplasm. It is found in the cytosol. It catalyses the reaction (2S)-ethylmalonyl-CoA + H(+) = butanoyl-CoA + CO2. The catalysed reaction is (S)-methylmalonyl-CoA + H(+) = propanoyl-CoA + CO2. It carries out the reaction (2R)-ethylmalonyl-CoA + H(+) = butanoyl-CoA + CO2. Functionally, decarboxylates ethylmalonyl-CoA, a potentially toxic metabolite, to form butyryl-CoA, suggesting it might be involved in metabolite proofreading. Acts preferentially on (S)-ethylmalonyl-CoA but also has some activity on the (R)-isomer. Also has methylmalonyl-CoA decarboxylase activity at lower level. The sequence is that of Ethylmalonyl-CoA decarboxylase (ECHDC1) from Pongo abelii (Sumatran orangutan).